Consider the following 381-residue polypeptide: Dual specificity protein phosphatase 6 (381 aa).

A Rhodanese domain is found at 30–148 (GNERLLLMDC…FQAEFSLHCE (119 aa)). Positions 176–203 (SSSDIESDLDRDPNSATDSDGSPLSNSQ) are disordered. Polar residues predominate over residues 189–203 (NSATDSDGSPLSNSQ). Residues 206 to 349 (FPVEILPFLY…LLDFERTLGL (144 aa)) form the Tyrosine-protein phosphatase domain. Catalysis depends on Cys-293, which acts as the Phosphocysteine intermediate.

This sequence belongs to the protein-tyrosine phosphatase family. Non-receptor class dual specificity subfamily. In terms of assembly, interacts with MAPK1/ERK2. Ubiquitinated by the SCF(FBXO31) complex, leading to its proteasomal degradation. As to expression, expressed in keratinocytes (at protein level).

The protein resides in the cytoplasm. It catalyses the reaction O-phospho-L-tyrosyl-[protein] + H2O = L-tyrosyl-[protein] + phosphate. The catalysed reaction is O-phospho-L-seryl-[protein] + H2O = L-seryl-[protein] + phosphate. It carries out the reaction O-phospho-L-threonyl-[protein] + H2O = L-threonyl-[protein] + phosphate. In terms of biological role, dual specificity protein phosphatase, which mediates dephosphorylation and inactivation of MAP kinases. Has a specificity for the ERK family. Plays an important role in alleviating chronic postoperative pain. Necessary for the normal dephosphorylation of the long-lasting phosphorylated forms of spinal MAPK1/3 and MAP kinase p38 induced by peripheral surgery, which drives the resolution of acute postoperative allodynia. Also important for dephosphorylation of MAPK1/3 in local wound tissue, which further contributes to resolution of acute pain. Promotes cell differentiation by regulating MAPK1/MAPK3 activity and regulating the expression of AP1 transcription factors. This is Dual specificity protein phosphatase 6 (DUSP6) from Homo sapiens (Human).